The chain runs to 471 residues: Glutamate--tRNA ligase (471 aa).

The 'HIGH' region signature appears at 9-19 (PSPTGYLHVGG). The Zn(2+) site is built by Cys98, Cys100, Cys125, and His127. Positions 237-241 (KLSKR) match the 'KMSKS' region motif. Lys240 is an ATP binding site.

The protein belongs to the class-I aminoacyl-tRNA synthetase family. Glutamate--tRNA ligase type 1 subfamily. In terms of assembly, monomer. Zn(2+) is required as a cofactor.

Its subcellular location is the cytoplasm. The catalysed reaction is tRNA(Glu) + L-glutamate + ATP = L-glutamyl-tRNA(Glu) + AMP + diphosphate. Catalyzes the attachment of glutamate to tRNA(Glu) in a two-step reaction: glutamate is first activated by ATP to form Glu-AMP and then transferred to the acceptor end of tRNA(Glu). The protein is Glutamate--tRNA ligase of Escherichia coli O9:H4 (strain HS).